The primary structure comprises 412 residues: Divalent metal cation transporter MntH (412 aa).

The Cytoplasmic segment spans residues 1 to 19 (MTNYRVESSSGRAARKMRL). Residues 20–39 (ALMGPAFIAAIGYIDPGNFA) form a helical membrane-spanning segment. The Periplasmic segment spans residues 40–51 (TNIQAGASFGYQ). The chain crosses the membrane as a helical span at residues 52–71 (LLWVVVWANLMAMLIQILSA). Over 72–95 (KLGIATGKNLAEQIRDHYPRPVVW) the chain is Cytoplasmic. The chain crosses the membrane as a helical span at residues 96–118 (FYWVQAEIIAMATDLAEFIGAAI). The Periplasmic portion of the chain corresponds to 119 to 125 (GFKLILG). Residues 126–145 (VSLLQGAVLTGIATFLILML) form a helical membrane-spanning segment. Topologically, residues 146–155 (QRRGQKPLEK) are cytoplasmic. Residues 156-175 (VIGGLLLFVAAAYIVELIFS) traverse the membrane as a helical segment. At 176-196 (QPNLAQLGKGMVIPSLPTSEA) the chain is on the periplasmic side. The helical transmembrane segment at 197-220 (VFLAAGVLGATIMPHVIYLHSSLT) threads the bilayer. Over 221–238 (QHLHGGSRQQRYSATKWD) the chain is Cytoplasmic. A helical membrane pass occupies residues 239 to 258 (VAIAMTIAGFVNLAMMATAA). The Periplasmic portion of the chain corresponds to 259–276 (AAFHFSGHTGVADLDEAY). Residues 277 to 297 (LTLQPLLSHAAATVFGLSLVA) form a helical membrane-spanning segment. Topologically, residues 298-327 (AGLSSTVVGTLAGQVVMQGFIRFHIPLWVR) are cytoplasmic. A helical transmembrane segment spans residues 328 to 344 (RTVTMLPSFIVILMGLD). Over 345–350 (PTRILV) the chain is Periplasmic. Residues 351–370 (MSQVLLSFGIALALVPLLIF) form a helical membrane-spanning segment. At 371-387 (TSDSKLMGDLVNSKRVK) the chain is on the cytoplasmic side. The helical transmembrane segment at 388–406 (QTGWVIVVLVVALNIWLLV) threads the bilayer. Residues 407 to 412 (GTALGL) lie on the Periplasmic side of the membrane.

This sequence belongs to the NRAMP family.

Its subcellular location is the cell inner membrane. Functionally, h(+)-stimulated, divalent metal cation uptake system. The sequence is that of Divalent metal cation transporter MntH from Escherichia fergusonii (strain ATCC 35469 / DSM 13698 / CCUG 18766 / IAM 14443 / JCM 21226 / LMG 7866 / NBRC 102419 / NCTC 12128 / CDC 0568-73).